The sequence spans 130 residues: Small ribosomal subunit protein uS11c (130 aa).

This sequence belongs to the universal ribosomal protein uS11 family. Part of the 30S ribosomal subunit.

It localises to the plastid. The protein resides in the chloroplast. The polypeptide is Small ribosomal subunit protein uS11c (Chara vulgaris (Common stonewort)).